The primary structure comprises 1002 residues: MPVDFLTSDQKQNYGCYAAEPNDVQLARYFHLDERDLAFINQRRGKHNRLGIALQLTTARFLGTFLTDLTQVLPGVQHFVAVQLNIHRPEVLSRYAERDTTLREHTALIKEYYGYHEFGDFPWSFRLKRLLYTRAWLSNERPGLMFDFATAWLLQNKVLLPGATTLVRLISEIRERANQRLWKKLAALPNKWQAAQVMELLVIPEGQRVSALEQLKKGPVTVSGPAFNEALERYIRLRSLEFSRLNFSGLPAIQLRNLARYAGMASVKYIARMPQQRKLAVLTAFVKAQEITALDDAVDVLDMLILDIIREAKKTGQKKRLRTLKDLDQAALLLARACALLLDDNTDVPDLRQVIFKCVPKNRLAESVSKVNELARPQNNNFHDEMVEQYGRVKRFLPAVLRDLHFRAAPAGEHVLAAIHYLAELNGSKKRILDDAPEHIITGPWKRLVYDAEGRIQRAGYSLCLLERLQDALRRRDIWLENSDRWGDPREKLLQGEEWQTQRIPVCRALGHPVDGRKGVQQLAIQLDETWKAVASRFEKNAEVHICNEGKYPSLTISCLEKQEEPPSLLRLNNRIKQLLPPVDLTELLLEIDAQTGFTHEFAHVSESGARAQDLHISLCAVLMAEACNIGLEPLIKHNIPALTRHRLSWVKQNYLRAETLVSANARLVDFQSTLELAGRWGGGEVASADGMRFVTPVKTINSGSNRKYFGSGRGITWYNFVSDQYSGFHGIVVPGTLRDSIFVLEGLLEQQTGLNPVEIMTDTAGSSDIIFGLFWLLGYQFSPRLADAGEAVFWRVNKSANYGVLDKLARGYADLSKAESQWDEMMRTAGSLKLGTIHASELIRSLLKSSRPSGLAQAIMEVGRVNKTLYLLNYIDDEDYRRRILTQLNRGEGRHAVARAICYGQRGEIRKRYREGQEDQLGALGLVTNAVVLWNTLYMEEALSWMRRNGEEIIDEDIARLSPLMHGHINMLGHYTFTLPEDILKGELRALNLNINNELSP.

Belongs to the transposase 7 family.

Its function is as follows. Required for transposition of transposon Tn1000. The sequence is that of Transposase for transposon gamma-delta (tnpA) from Escherichia coli (strain K12).